A 298-amino-acid polypeptide reads, in one-letter code: GTP cyclohydrolase FolE2 (298 aa).

The protein belongs to the GTP cyclohydrolase IV family.

It carries out the reaction GTP + H2O = 7,8-dihydroneopterin 3'-triphosphate + formate + H(+). It functions in the pathway cofactor biosynthesis; 7,8-dihydroneopterin triphosphate biosynthesis; 7,8-dihydroneopterin triphosphate from GTP: step 1/1. Converts GTP to 7,8-dihydroneopterin triphosphate. In Neisseria meningitidis serogroup C (strain 053442), this protein is GTP cyclohydrolase FolE2.